The chain runs to 295 residues: Pyridoxal 5'-phosphate synthase subunit PdxS (295 aa).

Asp-25 is a binding site for D-ribose 5-phosphate. Lys-82 serves as the catalytic Schiff-base intermediate with D-ribose 5-phosphate. Residue Gly-154 coordinates D-ribose 5-phosphate. Arg-166 is a D-glyceraldehyde 3-phosphate binding site. D-ribose 5-phosphate contacts are provided by residues Gly-215 and 236 to 237; that span reads GS.

It belongs to the PdxS/SNZ family. In terms of assembly, in the presence of PdxT, forms a dodecamer of heterodimers.

It carries out the reaction aldehydo-D-ribose 5-phosphate + D-glyceraldehyde 3-phosphate + L-glutamine = pyridoxal 5'-phosphate + L-glutamate + phosphate + 3 H2O + H(+). It functions in the pathway cofactor biosynthesis; pyridoxal 5'-phosphate biosynthesis. Catalyzes the formation of pyridoxal 5'-phosphate from ribose 5-phosphate (RBP), glyceraldehyde 3-phosphate (G3P) and ammonia. The ammonia is provided by the PdxT subunit. Can also use ribulose 5-phosphate and dihydroxyacetone phosphate as substrates, resulting from enzyme-catalyzed isomerization of RBP and G3P, respectively. The chain is Pyridoxal 5'-phosphate synthase subunit PdxS from Bacillus anthracis (strain A0248).